Consider the following 119-residue polypeptide: Anamorsin homolog (119 aa).

Positions 1–15 (MSSSATSTQAFSLKT) are enriched in polar residues. Disordered stretches follow at residues 1–21 (MSSS…PIPD) and 33–119 (LKQA…TDDV). Residues cysteine 42, cysteine 49, cysteine 52, and cysteine 54 each contribute to the [2Fe-2S] cluster site. Positions 42–54 (CTTRRRACKNCVC) are fe-S binding site A. [4Fe-4S] cluster contacts are provided by cysteine 81, cysteine 84, cysteine 92, and cysteine 95. 2 consecutive short sequence motifs (cx2C motif) follow at residues 81–84 (CGNC) and 92–95 (CANC). Residues 81–95 (CGNCSKGDAFRCANC) form a fe-S binding site B region.

This sequence belongs to the anamorsin family. As to quaternary structure, monomer. It depends on [2Fe-2S] cluster as a cofactor. [4Fe-4S] cluster serves as cofactor.

Its subcellular location is the cytoplasm. The protein resides in the mitochondrion intermembrane space. Component of the cytosolic iron-sulfur (Fe-S) protein assembly (CIA) machinery. Required for the maturation of extramitochondrial Fe-S proteins. Part of an electron transfer chain functioning in an early step of cytosolic Fe-S biogenesis, facilitating the de novo assembly of a [4Fe-4S] cluster on the cytosolic Fe-S scaffold complex. Electrons are transferred from NADPH via a FAD- and FMN-containing diflavin oxidoreductase. Together with the diflavin oxidoreductase, also required for the assembly of the diferric tyrosyl radical cofactor of ribonucleotide reductase (RNR), probably by providing electrons for reduction during radical cofactor maturation in the catalytic small subunit. The polypeptide is Anamorsin homolog (Leishmania infantum).